Here is a 1649-residue protein sequence, read N- to C-terminus: MATDSASCEPDLSRAPGDAEGATAEAAKKEFDVDTLSKSELRMLLSVMEGELEARDLVIEALRARRKEVFIQERYGRFNLNDPFLALQRDYEAGAGDKEKPVCTNPLSILEAVMAHCRKMQERMSAQLAAAESRQKKLEMEKLQLQALEQEHKKLAAHLEEERGKNKHVVLMLVKECKQLSGKVVEEAQKLEEVMVKLEEEKKKTSELEDQLSAEKQRSAGMEAQLEKQLFEFDTEREQLRAKLTREEAHTTDLKEEIDKMKKMMEQMKKGNDGKPGLSLPRKTKDKRLASISVATEGPVTRSVACQTDVVTESTDPVKKLPLSVPIKPSTGSPLVSTNTKGNVGPSALLIRPGIDRQASHSDLGPSPPTALPSSASRIEENGPSAGNAPDLSNSTPSTPSGTAPAAAQTLGAAPQNHSQAPPVHSLHSPCANTHPGLNPRIQAARFRFQGNANDPDQNGNNTQSPPSRDVSPTSRDNLVAKQLARNTVTQALSRFTSPQAGASSRLGASPGGDAGTCPPVGRTGLKTPGAARVDRGNPPPIPPKKPGLSQTPSPPHPQLRASNAGAKVDNKIVASPPSTLPQGTKVVNEENVPKSSSPQLPPKPSIDLTVASAGCPVSALATSQVGAWPAETPGLNQPACTDSSLVIPTTVAFRSSINPVSASSRSPGASDSLLVTASGWSPSLTPLLMSGGPAPLAGRPTLLQQAAAQGNVTLLSMLLNEEGLDINYCCEDSHSALYSAAKNGHTDCVRLLLNAEARVDAADKNGFTPLCVAAAQGHFECIELLTAYNANINHSAAGGQTPLYLACKTGNKECIKLLLEAGTDRSIKTRDGWTPIHAAVDTGNVDSLKLLMYHRVPAPGNSLSAEEPKSGLFSLNGGESPPGSSKPVVPADLINHADKEGWTAAHIAASKGFKNCLEILCRHGGLEPERRDKCNRTVHDVATDDCKHLLENLNALKIPLRISVGEIQPSNDGSDDFECEHTICTLNIRKQTSWEDFSKAVSQALTNHFQAISSDGCWGLEDGTLNNTTDSCIGLGTSSIQSIMLGSIPWSTGQSFSQSPWDFMKKKKVEQVTVLLSGPQEGCLSSVTYTSMIPLQMLQNYLRLVEQYHNVIFHGPEGSLQDYIANQLALCMKHRQMAAGFPCEIVRAEVDSGFSKEQLVDVFISNACLIPVKQFPVKKKIIVILENLEKSSLSELLGDFLAPLENRSTESPCTFQKGNGTSECYYFHENCFLLGTLAKACLQGSDLLVQQHFRWVQLRWDCEPSQGLLQRFLRRKAVSKFRGQLPAPCDPVCKIVDWVISVWRQLNSCLARLGTPEALLGPKYFLSCPVVPGHAQATVKWMSKLWNAIIAPRVQEAILSRAAMNKQPGARQTASKKHPSQGQQAVVRAALSILLNKAILHGCPLPRTELDQQIADFKGGSFPLSIVSSYSKKKGESAAWRKVNTSPRKKPGHFSSPMWNKPDLKHEGMRNKSVPHLNINRSSSLSKQQSLENDLSMTLTLDHRLSLGSDDEADLVKELQSMCSSKSESDISKIADSREDLRTFDSSRTNPVTSAPVNLRMPVPQKEASPLSSHQTTECSNSKSKTELGVSRVKSFLPVPRSKVAQCSQNTKRSSSSSSNTRQLEINNNSKEENWNVDKHEHVEKRNK.

The interval 1–27 (MATDSASCEPDLSRAPGDAEGATAEAA) is disordered. The span at 15-25 (APGDAEGATAE) shows a compositional bias: low complexity. A coiled-coil region spans residues 118-275 (RKMQERMSAQ…EQMKKGNDGK (158 aa)). Disordered stretches follow at residues 322-439 (PLSV…PGLN), 451-476 (GNAN…PTSR), and 492-604 (ALSR…LPPK). The segment covering 330 to 342 (STGSPLVSTNTKG) has biased composition (polar residues). Positions 395 to 416 (STPSTPSGTAPAAAQTLGAAPQ) are enriched in low complexity. Polar residues predominate over residues 492-503 (ALSRFTSPQAGA). Arg495 bears the Asymmetric dimethylarginine mark. 6 ANK repeats span residues 699-729 (GRPT…DINY), 733-762 (DSHS…RVDA), 766-795 (NGFT…NINH), 799-828 (GGQT…DRSI), 832-861 (DGWT…PAPG), and 901-931 (EGWT…EPER). The segment at 1438-1471 (SAAWRKVNTSPRKKPGHFSSPMWNKPDLKHEGMR) is disordered. Position 1510 is a phosphoserine (Ser1510). Positions 1527–1649 (KSESDISKIA…KHEHVEKRNK (123 aa)) are disordered. Basic and acidic residues predominate over residues 1528–1546 (SESDISKIADSREDLRTFD). Polar residues-rich tracts occupy residues 1547-1557 (SSRTNPVTSAP), 1571-1584 (PLSS…SNSK), and 1621-1630 (NTRQLEINNN). Positions 1631-1649 (SKEENWNVDKHEHVEKRNK) are enriched in basic and acidic residues.

As to quaternary structure, interacts with CTTN/cortactin SH3 domain. Interacts with STRN, STRN4/zinedin and MOB4/phocein; this interactions mediate the association with the STRIPAK core complex and may regulate dendritic spine distribution of the STRIPAK complex in hippocampal neurons. Activation of glutamate receptors weakens the interaction with STRN and STRN4.

It localises to the cytoplasm. It is found in the cell cortex. The protein resides in the cell projection. Its subcellular location is the dendritic spine. In terms of biological role, regulates the dendritic spine distribution of CTTN/cortactin in hippocampal neurons, and thus controls dendritic spinogenesis and dendritic spine maintenance. Associates with the striatin-interacting phosphatase and kinase (STRIPAK) core complex to regulate dendritic spine distribution of the STRIPAK complex in hippocampal neurons. This is Cortactin-binding protein 2 (Cttnbp2) from Rattus norvegicus (Rat).